A 395-amino-acid polypeptide reads, in one-letter code: Elongation factor Tu (395 aa).

A tr-type G domain is found at 10 to 204 (KTHANIGTIG…AVDEYIPTPE (195 aa)). The G1 stretch occupies residues 19 to 26 (GHVDHGKT). 19–26 (GHVDHGKT) is a GTP binding site. Thr-26 contacts Mg(2+). Residues 60–64 (GITIN) form a G2 region. Positions 81–84 (DCPG) are G3. GTP contacts are provided by residues 81 to 85 (DCPGH) and 136 to 139 (NKVD). Positions 136–139 (NKVD) are G4. Residues 174–176 (SAL) form a G5 region.

This sequence belongs to the TRAFAC class translation factor GTPase superfamily. Classic translation factor GTPase family. EF-Tu/EF-1A subfamily. Monomer.

It is found in the cytoplasm. The catalysed reaction is GTP + H2O = GDP + phosphate + H(+). In terms of biological role, GTP hydrolase that promotes the GTP-dependent binding of aminoacyl-tRNA to the A-site of ribosomes during protein biosynthesis. This chain is Elongation factor Tu, found in Macrococcus caseolyticus (strain JCSC5402) (Macrococcoides caseolyticum).